The sequence spans 147 residues: uncharacterized protein (147 aa).

This sequence belongs to the RTX toxin acyltransferase family.

This is an uncharacterized protein from Synechocystis sp. (strain ATCC 27184 / PCC 6803 / Kazusa).